Consider the following 609-residue polypeptide: QWRF motif-containing protein 4 (609 aa).

Disordered stretches follow at residues 1 to 227 (MQVG…IRGN) and 271 to 369 (EVSS…TAQS). Polar residues-rich tracts occupy residues 11–21 (GKQQQSVSDAT) and 46–57 (EVSSRYRSPTPT). 2 stretches are compositionally biased toward low complexity: residues 98-110 (PVSD…PVSS) and 129-143 (SLSV…SVPV). Polar residues predominate over residues 151-180 (VTSSTDRTLRPSSSNIAHKQQSETTSVTRK). 2 stretches are compositionally biased toward low complexity: residues 271 to 285 (EVSS…SSTE) and 302 to 332 (SAPG…PSRG). A QWRF motif motif is present at residues 407–410 (QWRF). A disordered region spans residues 588–609 (EEEVRDDAESSPLLPLSKFQWP).

The protein belongs to the QWRF family.

This Arabidopsis thaliana (Mouse-ear cress) protein is QWRF motif-containing protein 4 (QWRF4).